Here is a 39-residue protein sequence, read N- to C-terminus: Mating pheromone Er-11 (39 aa).

3 disulfides stabilise this stretch: Cys3-Cys19, Cys10-Cys34, and Cys15-Cys26.

In terms of assembly, homodimer.

It is found in the secreted. In terms of biological role, mating ciliate pheromones (or gamones) are diffusible extracellular communication signals that distinguish different intraspecific classes of cells commonly referred to as 'mating types'. They prepare the latter for conjugation by changing their cell surface properties. This chain is Mating pheromone Er-11 (MAT11), found in Euplotes raikovi.